The following is a 1056-amino-acid chain: Isoleucine--tRNA ligase (1056 aa).

The 'HIGH' region signature appears at 56–66 (PFATGLPHYGH). The 'KMSKS' region motif lies at 603 to 607 (KMSKS). Residue K606 coordinates ATP.

This sequence belongs to the class-I aminoacyl-tRNA synthetase family. IleS type 2 subfamily. In terms of assembly, monomer. It depends on Zn(2+) as a cofactor.

Its subcellular location is the cytoplasm. The catalysed reaction is tRNA(Ile) + L-isoleucine + ATP = L-isoleucyl-tRNA(Ile) + AMP + diphosphate. Functionally, catalyzes the attachment of isoleucine to tRNA(Ile). As IleRS can inadvertently accommodate and process structurally similar amino acids such as valine, to avoid such errors it has two additional distinct tRNA(Ile)-dependent editing activities. One activity is designated as 'pretransfer' editing and involves the hydrolysis of activated Val-AMP. The other activity is designated 'posttransfer' editing and involves deacylation of mischarged Val-tRNA(Ile). The sequence is that of Isoleucine--tRNA ligase from Bdellovibrio bacteriovorus (strain ATCC 15356 / DSM 50701 / NCIMB 9529 / HD100).